Reading from the N-terminus, the 511-residue chain is MNQILIQGVIIIISLLSIIIINQKDIILINIKNKYIKQISLLLIIYFIYIGIYINYLFNNNILGFQLINNYININWGIDGISLWLINLTLILLPISLISNWNISKNEDKSKVLTYVLLILIIGIIIILNFICLDLITFYILFEATLLPLFILIGKLGSLPYNGNNKIIIKGINNNNITPREKAAYYIFIYTLFSSLFMLLSIGIYIYMINNIDYNNIYNIILSIDLQSIIFIGLIIGILVKTPVFPVHTWLPLVHAESPISGSIILAGIIIKLAIYAIIRLILINLSDVIIIYNPLIYTIGILTIFYIGLITLKQIDIKVIIAYSSIIHMAIAIMSIFSNNILGIEGSLLISIAHGFASPALFLLVGGILYDRYHSRLIYYYQSLATYMPIFSIYLLIAGLFNMGIPLSLNFIGEFLSLNGIFIYNSLFAILSTFSLFITTIYQMKLTTKLLYGYKSIYINIWSIWGNDVNKRELLLLNILFFFIILFGIYPNLIIKSLNLSISSLLYIPF.

The next 14 membrane-spanning stretches (helical) occupy residues 1-21 (MNQI…IIII), 39-59 (ISLL…YLFN), 78-98 (IDGI…ISLI), 116-136 (VLLI…LDLI), 137-157 (TFYI…GKLG), 186-206 (YIFI…GIYI), 220-240 (IILS…GILV), 264-284 (IILA…LILI), 289-309 (VIII…FYIG), 318-338 (IKVI…MSIF), 349-369 (LLIS…VGGI), 388-408 (YMPI…GIPL), 422-442 (IFIY…ITTI), and 476-496 (LLLN…NLII).

Belongs to the complex I subunit 4 family.

It localises to the mitochondrion membrane. It catalyses the reaction a ubiquinone + NADH + 5 H(+)(in) = a ubiquinol + NAD(+) + 4 H(+)(out). In terms of biological role, core subunit of the mitochondrial membrane respiratory chain NADH dehydrogenase (Complex I) that is believed to belong to the minimal assembly required for catalysis. Complex I functions in the transfer of electrons from NADH to the respiratory chain. The immediate electron acceptor for the enzyme is believed to be ubiquinone. The sequence is that of NADH-ubiquinone oxidoreductase chain 4 (ND4) from Wickerhamomyces canadensis (Yeast).